The primary structure comprises 498 residues: uncharacterized protein (498 aa).

329–336 contributes to the ATP binding site; it reads GNPGTGKS.

It localises to the secreted. The protein resides in the cell wall. This is an uncharacterized protein from Mycobacterium tuberculosis (strain CDC 1551 / Oshkosh).